The primary structure comprises 389 residues: Capsule polysaccharide export protein KpsS (389 aa).

The chain is Capsule polysaccharide export protein KpsS (kpsS) from Escherichia coli.